The following is a 629-amino-acid chain: tRNA uridine 5-carboxymethylaminomethyl modification enzyme MnmG (629 aa).

FAD-binding positions include 13–18 (GGGHAG), valine 125, and serine 180. 273–287 (GPRYCPSIEDKVMRF) is an NAD(+) binding site. Residue glutamine 370 coordinates FAD.

The protein belongs to the MnmG family. As to quaternary structure, homodimer. Heterotetramer of two MnmE and two MnmG subunits. FAD is required as a cofactor.

The protein localises to the cytoplasm. Its function is as follows. NAD-binding protein involved in the addition of a carboxymethylaminomethyl (cmnm) group at the wobble position (U34) of certain tRNAs, forming tRNA-cmnm(5)s(2)U34. The polypeptide is tRNA uridine 5-carboxymethylaminomethyl modification enzyme MnmG (Salmonella choleraesuis (strain SC-B67)).